The sequence spans 420 residues: Ammonium transporter Amt2 (420 aa).

Transmembrane regions (helical) follow at residues 34–54, 71–91, 120–140, 149–169, 180–200, 220–240, 250–270, 273–293, 295–315, 339–359, and 365–385; these read VFFLVVMGVLVFMMQWGFAML, NMVDWLIGCVAWLFIGGILCS, SWFFGLVFCATAATIVSGGVA, VLISLIITGLLYPLFVYLGPW, AGSLVVHGLGGFLALGAIAAL, IPMAVFGAFALAIGWYGFNVG, GLVCATTTMAMAGGGIGALIA, NDVLFTANGIVAGLVAICSGT, VVSPIGGLIIGLIAGLQVPIV, VIGAILTGILGLKIFGGAGGV, and IIGAVFCIIYGTGLGYILAKI.

Belongs to the ammonia transporter channel (TC 1.A.11.2) family. In terms of assembly, homotrimer. Interacts and forms a complex with GlnK2.

The protein resides in the cell membrane. Its function is as follows. Involved in the uptake of ammonium/ammonia (NH(4)(+)/NH(3)). Transport is electrogenic. The polypeptide is Ammonium transporter Amt2 (Methanocaldococcus jannaschii (strain ATCC 43067 / DSM 2661 / JAL-1 / JCM 10045 / NBRC 100440) (Methanococcus jannaschii)).